The following is an 86-amino-acid chain: Cell division topological specificity factor (86 aa).

This sequence belongs to the MinE family.

Its function is as follows. Prevents the cell division inhibition by proteins MinC and MinD at internal division sites while permitting inhibition at polar sites. This ensures cell division at the proper site by restricting the formation of a division septum at the midpoint of the long axis of the cell. The chain is Cell division topological specificity factor from Stenotrophomonas maltophilia (strain K279a).